A 370-amino-acid chain; its full sequence is Keratin-associated protein 10-7 (370 aa).

The 30 X 5 AA repeats of C-C-X(3) stretch occupies residues 36-363 (DCPESCCEPP…CSRPACCGPT (328 aa)). Repeat copies occupy residues 41–45 (CCEPP), 46–50 (CCAPA), 67–71 (CCRVT), 89–93 (CCQQS), 99–103 (CCASS), 109–113 (CCVPV), 114–118 (CCKTV), 119–123 (CCKPV), 135–139 (CCQQS), 145–149 (CCTSS), 155–159 (CCVPI), 160–164 (CCKPV), 172–176 (CCQQS), 186–190 (CCQAV), 208–212 (CCQQS), 218–222 (CCTSS), 228–232 (CCVPV), 233–237 (CCKPV), 238–242 (CCVPT), 250–254 (CCQPA), 255–259 (CCTSS), 265–269 (CCVPV), 270–274 (CCKPV), 275–279 (CCVPV), 287–291 (CCQQS), 297–301 (CCTTS), 302–306 (CCRPS), 321–325 (CCVPV), 339–343 (CCRPA), and 359–363 (CCGPT).

The protein belongs to the KRTAP type 10 family. As to quaternary structure, interacts with hair keratins. Restricted to a narrow region of the hair fiber cuticle, lying approximately 20 cell layers above the apex of the dermal papilla of the hair root; not detected in any other tissues.

Its function is as follows. In the hair cortex, hair keratin intermediate filaments are embedded in an interfilamentous matrix, consisting of hair keratin-associated proteins (KRTAP), which are essential for the formation of a rigid and resistant hair shaft through their extensive disulfide bond cross-linking with abundant cysteine residues of hair keratins. The matrix proteins include the high-sulfur and high-glycine-tyrosine keratins. This chain is Keratin-associated protein 10-7 (KRTAP10-7), found in Homo sapiens (Human).